Consider the following 1025-residue polypeptide: Beta-galactosidase (1025 aa).

Asn103 and Asp202 together coordinate substrate. Na(+) is bound at residue Asp202. Mg(2+)-binding residues include Glu417, His419, and Glu462. Substrate-binding positions include Glu462 and 538 to 541 (EYAH). Catalysis depends on Glu462, which acts as the Proton donor. Residue Glu538 is the Nucleophile of the active site. Asn598 is a Mg(2+) binding site. Positions 602 and 605 each coordinate Na(+). Substrate-binding residues include Asn605 and Trp1003.

This sequence belongs to the glycosyl hydrolase 2 family. As to quaternary structure, homotetramer. Mg(2+) serves as cofactor. The cofactor is Na(+).

The enzyme catalyses Hydrolysis of terminal non-reducing beta-D-galactose residues in beta-D-galactosides.. This chain is Beta-galactosidase, found in Citrobacter koseri (strain ATCC BAA-895 / CDC 4225-83 / SGSC4696).